A 266-amino-acid chain; its full sequence is Type II pantothenate kinase (266 aa).

Residue 6–13 coordinates ATP; the sequence is DAGGTLIK. Glu-70 serves as the catalytic Proton acceptor. Residues Thr-99, 121–125, Tyr-137, and Ser-225 contribute to the ATP site; that span reads GGMIQ.

The protein belongs to the type II pantothenate kinase family. In terms of assembly, homodimer.

The protein localises to the cytoplasm. The enzyme catalyses (R)-pantothenate + ATP = (R)-4'-phosphopantothenate + ADP + H(+). It participates in cofactor biosynthesis; coenzyme A biosynthesis; CoA from (R)-pantothenate: step 1/5. Its function is as follows. Catalyzes the phosphorylation of pantothenate (Pan), the first step in CoA biosynthesis. This is Type II pantothenate kinase from Staphylococcus haemolyticus (strain JCSC1435).